Consider the following 645-residue polypeptide: UvrABC system protein C (645 aa).

The disordered stretch occupies residues 1 to 20; it reads MTDLPPHSSHHPADQGEPLV. Residues 40–118 enclose the GIY-YIG domain; it reads YSPGVYRMLS…IKRMKPRFNI (79 aa). Positions 228 to 263 constitute a UVR domain; that stretch reads TELQQRLVAEMEQASQELNYERAASIRDRIRGFASI.

This sequence belongs to the UvrC family. Interacts with UvrB in an incision complex.

Its subcellular location is the cytoplasm. Its function is as follows. The UvrABC repair system catalyzes the recognition and processing of DNA lesions. UvrC both incises the 5' and 3' sides of the lesion. The N-terminal half is responsible for the 3' incision and the C-terminal half is responsible for the 5' incision. The protein is UvrABC system protein C of Gluconobacter oxydans (strain 621H) (Gluconobacter suboxydans).